The primary structure comprises 80 residues: Probable small nuclear ribonucleoprotein G (80 aa).

The 72-residue stretch at 5–76 (GQPPDLKKYM…IVTVEALEPV (72 aa)) folds into the Sm domain.

Belongs to the snRNP Sm proteins family.

It is found in the nucleus. Functionally, probable common Sm protein, is found in U1 and U2 snRNPs and may be part of the spliceosome. In Arabidopsis thaliana (Mouse-ear cress), this protein is Probable small nuclear ribonucleoprotein G.